A 282-amino-acid chain; its full sequence is MYRERGMVGSKSEVVDRKRINEIHDNRPSHSMSQPVNGKGKVTSTSVLMGKQQLHDKESSRSGSISKTNISDAVDISDTDSEESEVSGSDGEDTSWISWFCNLRGNEFFCEVDDDYIQDDFNLCGLSHQVPYYDYALDLILDVESSHGEMFTEEQNELIESAAEMLYGMIHARFILTSKGLASMLDKYKNYDFGRCPRVYCCGQPCLPVGQSDIPRASTVKIYCPKCEDVYYPRSKYQGNIDGAYFGTTFPHLFLMTYGHLKPQKASQSYTQRVFGFKLHKP.

Positions 1-92 (MYRERGMVGS…ESEVSGSDGE (92 aa)) are disordered. Residues 13–28 (EVVDRKRINEIHDNRP) show a composition bias toward basic and acidic residues. 2 stretches are compositionally biased toward polar residues: residues 29-47 (SHSM…STSV) and 61-71 (RSGSISKTNIS). Positions 75–92 (DISDTDSEESEVSGSDGE) are enriched in acidic residues.

Belongs to the casein kinase 2 subunit beta family. In terms of assembly, heterotetramer of two catalytic alpha subunits and two regulatory beta subunits. Interacts with CCA1. Phosphorylated by alpha subunit.

The protein resides in the cytoplasm. It is found in the cytosol. The protein localises to the nucleus. Plays a complex role in regulating the basal catalytic activity of the alpha subunit. The tetrameric holoenzyme CK2, composed of two alpha and two beta subunits, phosphorylates the transcription factor PIF1 after an exposure to light, resulting in a proteasome-dependent degradation of PIF1 and promotion of photomorphogenesis. CK2 phosphorylates translation initiation factors. May participate in the regulation of the initiation of translation. In Arabidopsis thaliana (Mouse-ear cress), this protein is Casein kinase II subunit beta-2 (CKB2).